We begin with the raw amino-acid sequence, 233 residues long: Large ribosomal subunit protein uL1 (233 aa).

This sequence belongs to the universal ribosomal protein uL1 family. As to quaternary structure, part of the 50S ribosomal subunit.

Functionally, binds directly to 23S rRNA. The L1 stalk is quite mobile in the ribosome, and is involved in E site tRNA release. Its function is as follows. Protein L1 is also a translational repressor protein, it controls the translation of the L11 operon by binding to its mRNA. The sequence is that of Large ribosomal subunit protein uL1 from Zymomonas mobilis subsp. mobilis (strain ATCC 31821 / ZM4 / CP4).